Consider the following 175-residue polypeptide: MGSEENNSTSFPPTEPKLCDNGCGFFGSPSNMNLCSKCYRSLRAEEDQTAVAKAAVKNSLKLPSCSIIAPGQKHPLEIKPAHLETVVVTAEPSSVPVAAEQDEAEPSRPVRPNNRCFSCNKKVGVMGFKCKCGSTFCGSHRYPEKHECSFDFKEVGRDAIAKANPLVKADKVQRI.

Residues Pro13–Asp47 form an A20-type zinc finger. The Zn(2+) site is built by Cys19, Cys23, Cys35, Cys38, Cys116, Cys119, Cys130, Cys132, Cys137, His140, His146, and Cys148. An AN1-type zinc finger spans residues Val110–Gly156.

In terms of biological role, may be involved in environmental stress response. This is Zinc finger A20 and AN1 domain-containing stress-associated protein 7 (SAP7) from Arabidopsis thaliana (Mouse-ear cress).